Consider the following 569-residue polypeptide: Santalene synthase (569 aa).

The (2E)-geranyl diphosphate site is built by arginine 284, aspartate 321, aspartate 325, and arginine 460. The Mg(2+) site is built by aspartate 321 and aspartate 325. Positions 321–325 (DDAYD) match the DDXXD motif motif. Residues asparagine 463, threonine 467, and glutamate 471 each coordinate Mg(2+).

The protein belongs to the terpene synthase family. Tpsb subfamily. Mg(2+) serves as cofactor. Requires Mn(2+) as cofactor.

It carries out the reaction (2E,6E)-farnesyl diphosphate = (1S,5S,6R)-alpha-bergamotene + diphosphate. It catalyses the reaction (2E,6E)-farnesyl diphosphate = (+)-alpha-santalene + diphosphate. The enzyme catalyses (2E,6E)-farnesyl diphosphate = (-)-beta-santalene + diphosphate. Catalyzes a mixture of sesquiterpenoids from (2E,6E)-farnesyl diphosphate in fragrance biosynthesis. Catalyzes the formation of alpha-santalene, beta-santalene, epi-beta-santalene and exo-alpha-bergamotene, as well as traces of alpha-farnesene and beta-farnesene. The chain is Santalene synthase from Santalum austrocaledonicum (Sandalwood).